The sequence spans 200 residues: Putative 3-methyladenine DNA glycosylase (200 aa).

This sequence belongs to the DNA glycosylase MPG family.

This chain is Putative 3-methyladenine DNA glycosylase, found in Methanocella arvoryzae (strain DSM 22066 / NBRC 105507 / MRE50).